The chain runs to 158 residues: MLRQLLATARRLLLPLATPKRCLSSKPNGLDKSEYSTPPEVIDYEDPEGLPVPEYPVRPDEPLATRKQRLLYQSRKRGMLENDLLLSTFVAKYLKDFDEDETALYDKLINGVSNDWDIYYWATETKPTPPEYDTDIMKLLKQHVKNTERVQRIRQPDL.

Residues 1 to 23 (MLRQLLATARRLLLPLATPKRCL) constitute a mitochondrion transit peptide.

It belongs to the SDHAF2 family. As to quaternary structure, interacts with the flavoprotein subunit within the SDH catalytic dimer.

Its subcellular location is the mitochondrion matrix. Functionally, plays an essential role in the assembly of succinate dehydrogenase (SDH), an enzyme complex (also referred to as respiratory complex II) that is a component of both the tricarboxylic acid (TCA) cycle and the mitochondrial electron transport chain, and which couples the oxidation of succinate to fumarate with the reduction of ubiquinone (coenzyme Q) to ubiquinol. Required for flavinylation (covalent attachment of FAD) of the flavoprotein subunit of the SDH catalytic dimer. In Drosophila virilis (Fruit fly), this protein is Succinate dehydrogenase assembly factor 2, mitochondrial.